Reading from the N-terminus, the 93-residue chain is UPF0728 protein C10orf53 homolog (93 aa).

It belongs to the UPF0728 family.

The protein is UPF0728 protein C10orf53 homolog of Mus musculus (Mouse).